The primary structure comprises 309 residues: Ribonuclease Z (309 aa).

The Zn(2+) site is built by His63, His65, Asp67, His68, His145, Asp216, and His274. The Proton acceptor role is filled by Asp67.

The protein belongs to the RNase Z family. In terms of assembly, homodimer. Zn(2+) is required as a cofactor.

It carries out the reaction Endonucleolytic cleavage of RNA, removing extra 3' nucleotides from tRNA precursor, generating 3' termini of tRNAs. A 3'-hydroxy group is left at the tRNA terminus and a 5'-phosphoryl group is left at the trailer molecule.. Zinc phosphodiesterase, which displays some tRNA 3'-processing endonuclease activity. Probably involved in tRNA maturation, by removing a 3'-trailer from precursor tRNA. In Streptococcus gordonii (strain Challis / ATCC 35105 / BCRC 15272 / CH1 / DL1 / V288), this protein is Ribonuclease Z.